The sequence spans 427 residues: Adenylosuccinate synthetase (427 aa).

Residues 12-18 (GDEGKGK) and 40-42 (GHT) contribute to the GTP site. Residue Asp13 is the Proton acceptor of the active site. Mg(2+) is bound by residues Asp13 and Gly40. IMP contacts are provided by residues 13–16 (DEGK), 38–41 (NAGH), Thr128, Arg142, Gln223, Thr238, and Arg302. Catalysis depends on His41, which acts as the Proton donor. Residue 298–304 (TTTGRAR) participates in substrate binding. GTP-binding positions include Arg304, 330–332 (KLD), and 412–414 (AVG).

It belongs to the adenylosuccinate synthetase family. As to quaternary structure, homodimer. Mg(2+) serves as cofactor.

The protein resides in the cytoplasm. It catalyses the reaction IMP + L-aspartate + GTP = N(6)-(1,2-dicarboxyethyl)-AMP + GDP + phosphate + 2 H(+). The protein operates within purine metabolism; AMP biosynthesis via de novo pathway; AMP from IMP: step 1/2. Its function is as follows. Plays an important role in the de novo pathway of purine nucleotide biosynthesis. Catalyzes the first committed step in the biosynthesis of AMP from IMP. The protein is Adenylosuccinate synthetase of Desulfitobacterium hafniense (strain Y51).